The chain runs to 393 residues: tRNA (guanine-N(7)-)-methyltransferase (393 aa).

Positions 124, 149, and 176 each coordinate S-adenosyl-L-methionine. Asp-232 serves as a coordination point for substrate.

Belongs to the class I-like SAM-binding methyltransferase superfamily. TrmB family.

It carries out the reaction guanosine(46) in tRNA + S-adenosyl-L-methionine = N(7)-methylguanosine(46) in tRNA + S-adenosyl-L-homocysteine. It functions in the pathway tRNA modification; N(7)-methylguanine-tRNA biosynthesis. Its function is as follows. Catalyzes the formation of N(7)-methylguanine at position 46 (m7G46) in tRNA. The protein is tRNA (guanine-N(7)-)-methyltransferase of Helicobacter pylori (strain HPAG1).